The sequence spans 570 residues: MFS-type transporter ptmT (570 aa).

Over residues 1–11 (MPDSGNIQLDT) the composition is skewed to polar residues. The tract at residues 1-34 (MPDSGNIQLDTLQHKDHSQETTSHYEGGSQLPEQ) is disordered. 14 helical membrane-spanning segments follow: residues 50 to 70 (GLIRVILITMGVALCSFCVGL), 94 to 114 (WYVSAYLLVTSAFILSFGKIY), 121 to 141 (WTYLISLGLFELGSLICAITP), 151 to 171 (AISGLGSAGLFPGSVIILSNI), 182 to 202 (AFIGIMSGIATVTGPILGGVF), 210 to 230 (WCFYINLPIGGVTAVVVFLFM), 247 to 267 (GLDWIGTAVFIPAIVSLLLAL), 278 to 298 (NVRIIMLFIIAGVLGMVWLLI), 323 to 343 (IYTIPFVGCVIVLGYYLPIWF), 356 to 376 (IMNLPTVVGTIVVGLLSSVLI), 379 to 399 (VGYMMPFLVLGSVMLAVGAGL), 413 to 433 (IGYQAMIGMGAGLGYQLPLLV), 445 to 465 (VATAVVIFMQNLAGSIFSAIA), and 517 to 537 (VTHTFYAGVAAASLSVFGAFI). The N-linked (GlcNAc...) asparagine glycan is linked to asparagine 541. A disordered region spans residues 550–570 (PEPLVPGGSHSGAERDSKNGT). Positions 561–570 (GAERDSKNGT) are enriched in basic and acidic residues.

The protein belongs to the major facilitator superfamily. TCR/Tet family.

It localises to the cell membrane. Functionally, MFS-type transporter; part of the gene cluster that mediates the biosynthesis of the indole diterpenes penitrems. May be involved in the efflux of penitrems. The protein is MFS-type transporter ptmT of Penicillium ochrochloron.